We begin with the raw amino-acid sequence, 357 residues long: Decorin (357 aa).

Residues 1-16 (MRLVLLFVLLLPVCLA) form the signal peptide. A propeptide spanning residues 17 to 30 (TRFHQKGLFDFMIE) is cleaved from the precursor. The O-linked (Xyl...) (glycosaminoglycan) serine glycan is linked to Ser46. Disulfide bonds link Cys52/Cys58 and Cys56/Cys65. LRR repeat units lie at residues 71–91 (ERVP…NNKI), 92–115 (TEIK…NNKI), 116–139 (SKIS…KNNL), 140–160 (KELP…ENEI), 161–184 (SKLR…TNPL), 185–210 (KSSG…DTNI), 211–231 (TSIP…GNKI), 232–255 (SKID…FNSI), 256–279 (SSVE…NNEL), 280–302 (VRVP…NNKI), 303–332 (ASIG…SNPV), and 333–357 (QYWE…GNYK). Asn209 carries an N-linked (GlcNAc...) asparagine glycan. N-linked (GlcNAc...) asparagine glycosylation occurs at Asn260. A disulfide bond links Cys311 and Cys344.

It belongs to the small leucine-rich proteoglycan (SLRP) family. SLRP class I subfamily. As to quaternary structure, binds to type I and type II collagen, to fibronectin and TGF-beta. Forms a ternary complex with MFAP2 and ELN. In terms of processing, the attached glycosaminoglycan chain can be either chondroitin sulfate or dermatan sulfate depending upon the tissue of origin.

It localises to the secreted. It is found in the extracellular space. Its subcellular location is the extracellular matrix. Its function is as follows. May affect the rate of fibrils formation. The polypeptide is Decorin (DCN) (Gallus gallus (Chicken)).